The primary structure comprises 45 residues: Large ribosomal subunit protein bL34 (45 aa).

The segment at 1-45 (MTKRTFGGTSRKRKRVSGFRVRMRSHTGRRVVRTRRKRGRSRLTV) is disordered. A compositionally biased stretch (basic residues) spans 10–45 (SRKRKRVSGFRVRMRSHTGRRVVRTRRKRGRSRLTV).

The protein belongs to the bacterial ribosomal protein bL34 family.

This is Large ribosomal subunit protein bL34 from Prochlorococcus marinus (strain NATL2A).